A 673-amino-acid chain; its full sequence is DNA ligase (673 aa).

Residues 36-40, 85-86, and Glu116 contribute to the NAD(+) site; these read DAEYD and SL. Lys118 acts as the N6-AMP-lysine intermediate in catalysis. Residues Arg139, Glu176, Lys291, and Lys315 each contribute to the NAD(+) site. Positions 409, 412, 427, and 433 each coordinate Zn(2+). One can recognise a BRCT domain in the interval 592-673; it reads RGEQPLAGRT…LQALLQEHGR (82 aa).

The protein belongs to the NAD-dependent DNA ligase family. LigA subfamily. Requires Mg(2+) as cofactor. Mn(2+) serves as cofactor.

It carries out the reaction NAD(+) + (deoxyribonucleotide)n-3'-hydroxyl + 5'-phospho-(deoxyribonucleotide)m = (deoxyribonucleotide)n+m + AMP + beta-nicotinamide D-nucleotide.. DNA ligase that catalyzes the formation of phosphodiester linkages between 5'-phosphoryl and 3'-hydroxyl groups in double-stranded DNA using NAD as a coenzyme and as the energy source for the reaction. It is essential for DNA replication and repair of damaged DNA. This chain is DNA ligase, found in Alkalilimnicola ehrlichii (strain ATCC BAA-1101 / DSM 17681 / MLHE-1).